Here is a 399-residue protein sequence, read N- to C-terminus: Elongation factor Tu (399 aa).

The tr-type G domain occupies 10–204 (KPHVNIGTIG…AVDASIPEPE (195 aa)). The interval 19 to 26 (GHVDHGKT) is G1. Position 19 to 26 (19 to 26 (GHVDHGKT)) interacts with GTP. Residue T26 participates in Mg(2+) binding. Residues 60–64 (GITIN) are G2. Positions 81–84 (DCPG) are G3. GTP is bound by residues 81–85 (DCPGH) and 136–139 (NKCD). The tract at residues 136-139 (NKCD) is G4. Residues 174–176 (SGL) are G5.

It belongs to the TRAFAC class translation factor GTPase superfamily. Classic translation factor GTPase family. EF-Tu/EF-1A subfamily. As to quaternary structure, monomer.

It localises to the cytoplasm. The catalysed reaction is GTP + H2O = GDP + phosphate + H(+). Functionally, GTP hydrolase that promotes the GTP-dependent binding of aminoacyl-tRNA to the A-site of ribosomes during protein biosynthesis. This Prochlorococcus marinus (strain AS9601) protein is Elongation factor Tu.